The chain runs to 1661 residues: MEAPAAEPPVRGCGPQPAPAPAPAPERKKSHRAPSPARPKDVAGWSLAKGRRGPGPGSAVACSAAFSSRPDKKGRAVAPGARGAGVRVAGVRTGVRAKGRPRSGAGPRPPPPPPSLTDSSSEVSDCASEEARLLGLELALSSDAESAAGGPAGVRTGQPAQPAPSAQQPPRPPASPDEPSVAASSVGSSRLPLSASLAFSDLTEEMLDCGPSGLVRELEELRSENDYLKDEIEELRAEMLEMRDVYMEEDVYQLQELRQQLDQASKTCRILQYRLRKAERRSLRAAQTGQVDGELIRGLEQDVKVSKDISMRLHKELEVVEKKRARLEEENEELRQRLIETELAKQVLQTELERPREHSLKKRGTRSLGKADKKTLVQEDSADLKCQLHFAKEESALMCKKLTKLAKENDSMKEELLKYRSLYGDLDSALSAEELADAPHSRETELKVHLKLVEEEANLLSRRIVELEVENRGLRAEMDDMKDHGGGCGGPEARLAFSALGGGECGESLAELRRHLQFVEEEAELLRRSSAELEDQNKLLLNELAKFRSEHELDVALSEDSCSVLSEPSQEELAAAKLQIGELSGKVKKLQYENRVLLSNLQRCDLASCQSTRPMLETDAEAGDSAQCVPAPLGETHESHAVRLCRAREAEVLPGLREQAALVSKAIDVLVADANGFTAGLRLCLDNECADFRLHEAPDNSEGPRDTKLIHAILVRLSVLQQELNAFTRKADAVLGCSVKEQQESFSSLPPLGSQGLSKEILLAKDLGSDFQPPDFRDLPEWEPRIREAFRTGDLDSKPDPSRSFRPYRAEDNDSYASEIKELQLVLAEAHDSLRGLQEQLSQERQLRKEEADNFNQKMVQLKEDQQRALLRREFELQSLSLQRRLEQKFWSQEKNMLVQESQQFKHNFLLLFMKLRWFLKRWRQGKVLPSEGDDFLEVNSMKELYLLMEEEEINAQHSDNKACTGDSWTQNTPNEYIKTLADMKVTLKELCWLLRDERRGLTELQQQFAKAKATWETERAELKGHTSQMELKTGKGAGERAGPDWKAALQREREEQQHLLAESYSAVMELTRQLQISERNWSQEKLQLVERLQGEKQQVEQQVKELQNRLSQLQKAADPWVLKHSELEKQDNSWKETRSEKIHDKEAVSEVELGGNGLKRTKSVSSMSEFESLLDCSPYLAGGDARGKKLPNNPAFGFVSSEPGDPEKDTKEKPGLSSRDCNHLGALACQDPPGRQMQRSYTAPDKTGIRVYYSPPVARRLGVPVVHDKEGKIIIEPGFLFTTAKPKESAEADGLAESSYGRWLCNFSRQRLDGGSAGSPSAAGPGFPAALHDFEMSGNMSDDMKEITNCVRQAMRSGSLERKVKSTSSQTVGLASVGTQTIRTVSVGLQTDPPRSSLHGKAWSPRSSSLVSVRSKQISSSLDKVHSRIERPCCSPKYGSPKLQRRSVSKLDSSKDRSLWNLHQGKQNGSAWARSTTTRDSPVLRNINDGLSSLFSVVEHSGSTESVWKLGMSETRAKPEPPKYGIVQEFFRNVCGRAPSPTSSAGEEGTKKPEPLSPASYHQPEGVARILNKKAAKLGSSEEVRLTMLPQVGKDGVLRDGDGAVVLPNEDAVCDCSTQSLTSCFARSSRSAIRHSPSKCRLHPSESSWGGEERALPPSE.

Positions 1–187 (MEAPAAEPPV…EPSVAASSVG (187 aa)) are disordered. Composition is skewed to low complexity over residues 76 to 94 (AVAP…VRTG) and 133 to 149 (LLGL…SAAG). Over residues 167–176 (QQPPRPPASP) the composition is skewed to pro residues. Residues 211–240 (PSGLVRELEELRSENDYLKDEIEELRAEML) form a required for association with Golgi apparatus membrane region. Coiled-coil stretches lie at residues 218–281 (LEEL…AERR) and 310–351 (SMRL…LQTE). The disordered stretch occupies residues 353–373 (ERPREHSLKKRGTRSLGKADK). 3 coiled-coil regions span residues 450 to 484 (LKLV…MKDH), 820 to 865 (IKEL…LKED), and 1083 to 1117 (SQEK…LQKA). The residue at position 1169 (Ser1169) is a Phosphoserine. Positions 1196–1221 (AFGFVSSEPGDPEKDTKEKPGLSSRD) are disordered. Residues 1206–1215 (DPEKDTKEKP) show a composition bias toward basic and acidic residues. Residue Ser1255 is modified to Phosphoserine. Disordered regions lie at residues 1432-1456 (RPCC…DSSK), 1538-1563 (RAPS…ASYH), and 1636-1661 (HSPS…PPSE). The segment covering 1652-1661 (GEERALPPSE) has biased composition (basic and acidic residues).

Belongs to the MTCL family. In terms of assembly, interacts with CLASP1 and CLASP2. The C-terminal 25 kDa form occurs as a monomer. Proteolytically cleaved in primary hepatocytes into a C-terminal 80 kDa form. Proteolytically cleaved into a C-terminal SOGA 25 kDa form that is detected in plasma. In terms of processing, phosphorylated during mitosis in a CDK1-dependent manner.

Its subcellular location is the cytoplasm. The protein localises to the cytoskeleton. It localises to the golgi apparatus membrane. It is found in the midbody. The protein resides in the secreted. In terms of biological role, microtubule-associated factor that enables integration of the centrosomal and Golgi-associated microtubules on the Golgi membrane, supporting directional migration. Preferentially acts on the perinuclear microtubules accumulated around the Golgi. Associates with the Golgi membrane through the N-terminal coiled-coil region and directly binds microtubules through the C-terminal domain. Required for faithful chromosome segregation during mitosis. Regulates autophagy by playing a role in the reduction of glucose production in an adiponectin- and insulin-dependent manner. This is Microtubule cross-linking factor 2 from Homo sapiens (Human).